We begin with the raw amino-acid sequence, 957 residues long: Protein translocase subunit SecA (957 aa).

Residues Q87, 105–109, and D512 contribute to the ATP site; that span reads GEGKT. The tract at residues 924–957 is disordered; the sequence is AAPAQAPSKSKRSAGRNDPCPCGSGQKYKKCCGK. Positions 943, 945, 954, and 955 each coordinate Zn(2+).

Belongs to the SecA family. As to quaternary structure, monomer and homodimer. Part of the essential Sec protein translocation apparatus which comprises SecA, SecYEG and auxiliary proteins SecDF-YajC and YidC. Zn(2+) is required as a cofactor.

It is found in the cell inner membrane. The protein resides in the cytoplasm. It carries out the reaction ATP + H2O + cellular proteinSide 1 = ADP + phosphate + cellular proteinSide 2.. Its function is as follows. Part of the Sec protein translocase complex. Interacts with the SecYEG preprotein conducting channel. Has a central role in coupling the hydrolysis of ATP to the transfer of proteins into and across the cell membrane, serving as an ATP-driven molecular motor driving the stepwise translocation of polypeptide chains across the membrane. The protein is Protein translocase subunit SecA of Geobacter sp. (strain M21).